A 473-amino-acid polypeptide reads, in one-letter code: 3-isopropylmalate dehydratase large subunit (473 aa).

[4Fe-4S] cluster-binding residues include Cys-354, Cys-414, and Cys-417.

Belongs to the aconitase/IPM isomerase family. LeuC type 1 subfamily. In terms of assembly, heterodimer of LeuC and LeuD. Requires [4Fe-4S] cluster as cofactor.

It carries out the reaction (2R,3S)-3-isopropylmalate = (2S)-2-isopropylmalate. It functions in the pathway amino-acid biosynthesis; L-leucine biosynthesis; L-leucine from 3-methyl-2-oxobutanoate: step 2/4. In terms of biological role, catalyzes the isomerization between 2-isopropylmalate and 3-isopropylmalate, via the formation of 2-isopropylmaleate. This Mycobacterium marinum (strain ATCC BAA-535 / M) protein is 3-isopropylmalate dehydratase large subunit.